The chain runs to 348 residues: MDMANLTWLHGQPQSTGVLKANPEDFVVVEDLGFEPDGEGEHVLVNIRKNGCNTQFVADYLARFAGIHARSVSYAGLKDRHAVTEQWFCLHLPGKETPDFTQFSLEGCEVLASARHLRKMRIGTLKGNAFTLVLRHISDRQDVEPRLQAIATGGVPNYFGSQRFGRGGNNLVMARRWANDEIRVKERSKRSFYLSASRSALFNLIASRRLANQQQHTVLEGDALQLSGRGSWFVAKPEELEALQQRLDAGELMITAPLPGDGEPGTAGEALSFEQQCLLEQPELMALLKRERVDPARRALLLQPKNMHWEWWDDATVELRFWLPAGSFATSVVREIMRQDSSDADISE.

A substrate-binding site is contributed by Phe26. The active-site Nucleophile is Asp79. Asn128 serves as a coordination point for substrate. The 149-residue stretch at 154 to 302 (GVPNYFGSQR…VDPARRALLL (149 aa)) folds into the TRUD domain. Residue Phe328 coordinates substrate.

It belongs to the pseudouridine synthase TruD family.

The catalysed reaction is uridine(13) in tRNA = pseudouridine(13) in tRNA. Functionally, responsible for synthesis of pseudouridine from uracil-13 in transfer RNAs. This chain is tRNA pseudouridine synthase D, found in Serratia proteamaculans (strain 568).